Here is a 200-residue protein sequence, read N- to C-terminus: Recombination protein RecR (200 aa).

The C4-type zinc-finger motif lies at 57 to 72; that stretch reads CERCRNYAQSTLCPVC. Positions 80 to 175 constitute a Toprim domain; it reads SLVCIVATPG…GVSRIAQGVP (96 aa).

It belongs to the RecR family.

Functionally, may play a role in DNA repair. It seems to be involved in an RecBC-independent recombinational process of DNA repair. It may act with RecF and RecO. This chain is Recombination protein RecR, found in Alcanivorax borkumensis (strain ATCC 700651 / DSM 11573 / NCIMB 13689 / SK2).